Consider the following 245-residue polypeptide: UPF0246 protein Cgl1995/cg2186 (245 aa).

This sequence belongs to the UPF0246 family.

In Corynebacterium glutamicum (strain ATCC 13032 / DSM 20300 / JCM 1318 / BCRC 11384 / CCUG 27702 / LMG 3730 / NBRC 12168 / NCIMB 10025 / NRRL B-2784 / 534), this protein is UPF0246 protein Cgl1995/cg2186.